Reading from the N-terminus, the 318-residue chain is Ferric enterobactin-binding periplasmic protein FepB (318 aa).

The N-terminal stretch at 1–26 (MRLAPLYRNALLLTGLLLSGIAAVQA) is a signal peptide. One can recognise a Fe/B12 periplasmic-binding domain in the interval 48 to 318 (RIVSTSVTLT…QVLDRLKALF (271 aa)).

This sequence belongs to the bacterial solute-binding protein 8 family. As to quaternary structure, the complex is composed of two ATP-binding proteins (FepC), two transmembrane proteins (FepD and FepG) and a solute-binding protein (FepB).

It localises to the periplasm. Its function is as follows. Part of the ABC transporter complex FepBDGC involved in ferric enterobactin uptake. Binds ferric enterobactin. In Escherichia coli O6:H1 (strain CFT073 / ATCC 700928 / UPEC), this protein is Ferric enterobactin-binding periplasmic protein FepB (fepB).